The chain runs to 150 residues: Large ribosomal subunit protein bL9 (150 aa).

Belongs to the bacterial ribosomal protein bL9 family.

Its function is as follows. Binds to the 23S rRNA. The protein is Large ribosomal subunit protein bL9 of Pediococcus pentosaceus (strain ATCC 25745 / CCUG 21536 / LMG 10740 / 183-1w).